The chain runs to 1426 residues: Ferlin 2 (1426 aa).

5 consecutive C2 domains span residues 1–111 (MGKT…QIRK), 161–279 (RKAV…PRWF), 512–638 (EKSK…ESPT), 1031–1154 (SEDR…QKSM), and 1189–1318 (KAGE…TLNS). A disordered region spans residues 1357 to 1377 (SKPVGLGREPPNRDPRLTTPQ). Over residues 1366 to 1377 (PPNRDPRLTTPQ) the composition is skewed to basic and acidic residues. The helical transmembrane segment at 1404–1424 (VAAVVFLSIWIFVVAFLYPSL) threads the bilayer.

The protein belongs to the ferlin family.

It is found in the membrane. The protein localises to the inner membrane complex. It localises to the cytoplasmic vesicle. Its subcellular location is the secretory vesicle. The protein resides in the rhoptry. Regulates rhoptry secretion. Required for completing the lytic cycle. Required for host cell invasion. Not required for microneme secretion and conoid extrusion. The polypeptide is Ferlin 2 (Toxoplasma gondii).